Here is a 529-residue protein sequence, read N- to C-terminus: uncharacterized protein (529 aa).

Residues 1–20 are disordered; that stretch reads MGADLKQPQDADSPPKGVSR. A signal peptide (tat-type signal) is located at residues 1–52; it reads MGADLKQPQDADSPPKGVSRRRFLTTGAAAVVGTGVGAGGTALLSSHPRGPA.

Post-translationally, predicted to be exported by the Tat system. The position of the signal peptide cleavage has not been experimentally proven.

This is an uncharacterized protein from Mycobacterium tuberculosis (strain CDC 1551 / Oshkosh).